The chain runs to 136 residues: Small ribosomal subunit protein uS8c (136 aa).

It belongs to the universal ribosomal protein uS8 family. In terms of assembly, part of the 30S ribosomal subunit.

It is found in the plastid. It localises to the chloroplast. Its function is as follows. One of the primary rRNA binding proteins, it binds directly to 16S rRNA central domain where it helps coordinate assembly of the platform of the 30S subunit. This is Small ribosomal subunit protein uS8c (rps8) from Tetradesmus obliquus (Green alga).